Reading from the N-terminus, the 233-residue chain is Large ribosomal subunit protein uL1 (233 aa).

The protein belongs to the universal ribosomal protein uL1 family. In terms of assembly, part of the 50S ribosomal subunit.

Binds directly to 23S rRNA. The L1 stalk is quite mobile in the ribosome, and is involved in E site tRNA release. In terms of biological role, protein L1 is also a translational repressor protein, it controls the translation of the L11 operon by binding to its mRNA. This Parvibaculum lavamentivorans (strain DS-1 / DSM 13023 / NCIMB 13966) protein is Large ribosomal subunit protein uL1.